The following is a 418-amino-acid chain: UDP-N-acetylglucosamine 1-carboxyvinyltransferase (418 aa).

22–23 (KN) provides a ligand contact to phosphoenolpyruvate. Arginine 92 contacts UDP-N-acetyl-alpha-D-glucosamine. Cysteine 116 (proton donor) is an active-site residue. Position 116 is a 2-(S-cysteinyl)pyruvic acid O-phosphothioketal (cysteine 116). Residues 121 to 125 (RPVDQ), aspartate 306, and isoleucine 328 each bind UDP-N-acetyl-alpha-D-glucosamine.

It belongs to the EPSP synthase family. MurA subfamily.

Its subcellular location is the cytoplasm. It carries out the reaction phosphoenolpyruvate + UDP-N-acetyl-alpha-D-glucosamine = UDP-N-acetyl-3-O-(1-carboxyvinyl)-alpha-D-glucosamine + phosphate. The protein operates within cell wall biogenesis; peptidoglycan biosynthesis. Cell wall formation. Adds enolpyruvyl to UDP-N-acetylglucosamine. This chain is UDP-N-acetylglucosamine 1-carboxyvinyltransferase, found in Acinetobacter baylyi (strain ATCC 33305 / BD413 / ADP1).